Reading from the N-terminus, the 72-residue chain is SRY-related protein ADW4 (72 aa).

The segment at residues 1–69 is a DNA-binding region (HMG box); it reads VKRPMNAFMV…KHMADYPNYK (69 aa).

Its subcellular location is the nucleus. In Alligator mississippiensis (American alligator), this protein is SRY-related protein ADW4.